The primary structure comprises 143 residues: Transcriptional regulator MraZ (143 aa).

SpoVT-AbrB domains lie at 5–47 (TYAP…SQRE) and 76–119 (ASAE…DAEA).

This sequence belongs to the MraZ family. As to quaternary structure, forms oligomers.

The protein localises to the cytoplasm. The protein resides in the nucleoid. This Leifsonia xyli subsp. xyli (strain CTCB07) protein is Transcriptional regulator MraZ.